The primary structure comprises 422 residues: Phytoene synthase, chloroplastic (422 aa).

Residues 1-83 (MSLASSLVVS…GSVIVASMVA (83 aa)) constitute a chloroplast transit peptide.

It belongs to the phytoene/squalene synthase family. As to quaternary structure, monomer.

The protein localises to the plastid. It is found in the chloroplast. It catalyses the reaction 2 (2E,6E,10E)-geranylgeranyl diphosphate = 15-cis-phytoene + 2 diphosphate. It participates in carotenoid biosynthesis; phytoene biosynthesis; all-trans-phytoene from geranylgeranyl diphosphate: step 1/1. Functionally, catalyzes the reaction from prephytoene diphosphate to phytoene. The protein is Phytoene synthase, chloroplastic (PSY) of Cucumis melo (Muskmelon).